Here is a 539-residue protein sequence, read N- to C-terminus: M protein, serotype 24 (539 aa).

A signal peptide spans 1-42 (MTKNNTNRHYSLRKLKTGTASVAVALTVLGAGLVVNTNEVSA). One copy of the A-1 repeat lies at 118–152 (LEARKADLEKALEGAMNFSTADSAKIKTLEAEKAA). The tract at residues 118–301 (LEARKADLEK…ALEAEKADLE (184 aa)) is 5.3 X 35 AA tandem repeats, A-type. The stretch at 153–187 (LAARKADLEKALEGAMNFSTADSAKIKTLEAEKAA) is one A-2 repeat. The stretch at 188–222 (LEARQAELEKALEGAMNFSTADSAKIKTLEAEKAA) is one A-3 repeat. The stretch at 223–257 (LAARKADLEKALEGAMNFSTADSAKIKTLEAEKAA) is one A-4 repeat. Residues 258-292 (LEARQAELEKALEGAMNFSTADSAKIKTLEAEKAA) form an A-5 repeat. The A-6; truncated repeat unit spans residues 293 to 297 (LEAEK). The tract at residues 297-401 (KADLEHQSQV…REAKKQVEKA (105 aa)) is disordered. C repeat units follow at residues 298 to 332 (ADLE…EAEH), 333 to 367 (QKLE…EAEH), and 368 to 402 (QKLE…EKAL). The span at 303 to 312 (QSQVLNANRQ) shows a compositional bias: polar residues. Basic and acidic residues-rich tracts occupy residues 314 to 340 (LRRD…EQNK), 349 to 375 (LRRD…EQNK), and 384 to 401 (LRRD…VEKA). 4 D repeats span residues 435–440 (AKLEAE), 441–446 (AKALKE), 449–454 (AKQAEE), and 456–461 (AKLRAG). The tract at residues 456–511 (AKLRAGKASDSQTPDAKPGNKAVPGKGQAPQAGTKPNQNKAPMKETKRQLPSTGET) is disordered. Residues 505 to 509 (LPSTG) carry the LPXTG sorting signal motif. Residue Thr508 is modified to Pentaglycyl murein peptidoglycan amidated threonine. Residues 509–539 (GETANPFFTAAALTVMATAGVAAVVKRKEEN) constitute a propeptide, removed by sortase.

Belongs to the M protein family.

It localises to the secreted. The protein resides in the cell wall. In terms of biological role, this protein is one of the different antigenic serotypes of protein M. Protein M is closely associated with virulence of the bacterium and can render the organism resistant to phagocytosis. The protein is M protein, serotype 24 (emm24) of Streptococcus pyogenes.